The primary structure comprises 248 residues: Something about silencing protein 5 (248 aa).

Residues 1–139 (MDHSIEVTFR…SELSKYFDLP (139 aa)) form the YEATS domain. At S144 the chain carries Phosphoserine. Residues 223-248 (TKQERTNFGSDAIHKDEPVKAHNKLK) form a disordered region.

As to quaternary structure, component of the SAS complex, at least composed of SAS2, SAS4 and SAS5. These three proteins constitute the core of the complex, and are sufficient to acetylate histones.

The protein resides in the nucleus. Component of the SAS complex, a multiprotein complex that acetylates 'Lys-16' of histone H4 and 'Lys-14' of histone H3. The SAS complex is however unable to acetylate nucleosomal histones. The complex is involved in transcriptional silencing at telomeres and at HML locus. Also involved in rDNA silencing. In the complex, SAS5 is required for maximal histone acetyltransferase (HAT) activity of the complex, suggesting that it may be required to stabilize the complex or help in substrate recognition. The protein is Something about silencing protein 5 (SAS5) of Saccharomyces cerevisiae (strain ATCC 204508 / S288c) (Baker's yeast).